Here is a 404-residue protein sequence, read N- to C-terminus: Phosphoribulokinase, chloroplastic (404 aa).

The transit peptide at 1 to 53 directs the protein to the chloroplast; sequence MAFCSPHTTTSLRSPCTTIPNSGFRQNQVIFFTTRSSRRSNTRHGARTFQVSC. C69 and C108 are disulfide-bonded.

The protein belongs to the phosphoribulokinase family.

The protein resides in the plastid. The protein localises to the chloroplast. The enzyme catalyses D-ribulose 5-phosphate + ATP = D-ribulose 1,5-bisphosphate + ADP + H(+). Its pathway is carbohydrate biosynthesis; Calvin cycle. With respect to regulation, light regulated via thioredoxin by reversible oxidation/reduction of sulfhydryl/disulfide groups. The protein is Phosphoribulokinase, chloroplastic of Triticum aestivum (Wheat).